The sequence spans 665 residues: Kinesin-like protein KIF22 (665 aa).

In terms of domain architecture, Kinesin motor spans 43 to 368; the sequence is RVRVAVRLRP…LNFAARSKEV (326 aa). Residue 127–134 coordinates ATP; that stretch reads GPTGAGKT. Positions 379–428 are disordered; that stretch reads QPHALGPVKLSQKELLGPPEAKRARGPEEEEIGSPEPMAAPASASQKLSP. Phosphoserine occurs at positions 412, 427, and 452. The span at 412–428 shows a compositional bias: low complexity; it reads SPEPMAAPASASQKLSP. A Glycyl lysine isopeptide (Lys-Gly) (interchain with G-Cter in SUMO2) cross-link involves residue lysine 465. Positions 465 to 508 form a coiled coil; sequence KRERMVLMKTVEEKDLEIERLKTKQKELEAKMLAQKAEEKENHC. 3 positions are modified to phosphoserine: serine 543, serine 562, and serine 581.

This sequence belongs to the TRAFAC class myosin-kinesin ATPase superfamily. Kinesin family. As to quaternary structure, interacts with FAM83D. Interacts with SIAH1. In terms of processing, ubiquitinated; mediated by SIAH1 and leading to its subsequent proteasomal degradation. As to expression, expressed in bone, cartilage, joint capsule, ligament, skin, and primary cultured chondrocytes.

It localises to the nucleus. The protein resides in the cytoplasm. Its subcellular location is the cytoskeleton. Its function is as follows. Kinesin family member that is involved in spindle formation and the movements of chromosomes during mitosis and meiosis. Binds to microtubules and to DNA. Plays a role in congression of laterally attached chromosomes in NDC80-depleted cells. In Homo sapiens (Human), this protein is Kinesin-like protein KIF22 (KIF22).